The primary structure comprises 272 residues: Pyrroline-5-carboxylate reductase 3 (272 aa).

The protein belongs to the pyrroline-5-carboxylate reductase family.

It localises to the cytoplasm. The catalysed reaction is L-proline + NADP(+) = (S)-1-pyrroline-5-carboxylate + NADPH + 2 H(+). It carries out the reaction L-proline + NAD(+) = (S)-1-pyrroline-5-carboxylate + NADH + 2 H(+). It participates in amino-acid biosynthesis; L-proline biosynthesis; L-proline from L-glutamate 5-semialdehyde: step 1/1. In terms of biological role, catalyzes the reduction of 1-pyrroline-5-carboxylate (PCA) to L-proline. The chain is Pyrroline-5-carboxylate reductase 3 (proG) from Bacillus subtilis (strain 168).